A 206-amino-acid chain; its full sequence is Ribosomal RNA small subunit methyltransferase G (206 aa).

Residues glycine 73, leucine 78, 124–125, and arginine 139 each bind S-adenosyl-L-methionine; that span reads VE.

It belongs to the methyltransferase superfamily. RNA methyltransferase RsmG family.

Its subcellular location is the cytoplasm. It carries out the reaction guanosine(527) in 16S rRNA + S-adenosyl-L-methionine = N(7)-methylguanosine(527) in 16S rRNA + S-adenosyl-L-homocysteine. Functionally, specifically methylates the N7 position of guanine in position 527 of 16S rRNA. This chain is Ribosomal RNA small subunit methyltransferase G, found in Photobacterium profundum (strain SS9).